Here is a 20-residue protein sequence, read N- to C-terminus: M-poneritoxin-Ng1f (20 aa).

Lysine amide is present on Lys20.

As to expression, expressed by the venom gland.

The protein localises to the secreted. Its subcellular location is the target cell membrane. Functionally, has activity against Gram-positive bacteria. Has insecticidal and hemolytic activities. May act by disrupting the integrity of the bacterial cell membrane. This chain is M-poneritoxin-Ng1f, found in Neoponera goeldii (Ponerine ant).